The sequence spans 305 residues: Tetraspanin-12 (305 aa).

Over Met-1–Cys-12 the chain is Cytoplasmic. 2 S-palmitoyl cysteine lipidation sites follow: Cys-9 and Cys-12. The chain crosses the membrane as a helical span at residues Leu-13–Ala-33. Topologically, residues Trp-34–Tyr-59 are extracellular. A helical transmembrane segment spans residues Phe-60–Leu-80. Residues Gly-81–Asn-89 are Cytoplasmic-facing. Residue Cys-83 is the site of S-palmitoyl cysteine attachment. The helical transmembrane segment at Leu-90–Cys-110 threads the bilayer. Over Gly-111–Arg-224 the chain is Extracellular. A helical membrane pass occupies residues Phe-225–Leu-245. The Cytoplasmic segment spans residues Trp-246–Leu-305.

This sequence belongs to the tetraspanin (TM4SF) family. Interacts (when palmitoylated) with ADAM10. Interacts with MMP14/MT1-MMP. Component of a complex, at least composed of TSPAN12, FZD4 and norrin (NDP). Post-translationally, palmitoylated; required for interaction with ADAM10. As to expression, expressed in the neonatal retinal vasculature but not other retinal tissues. Also detected in the neonatal meningeal vasculature and in nonvascular cell types, such as the smooth muscle cells in the neonatal intestine.

The protein localises to the cell membrane. Regulator of cell surface receptor signal transduction. Acts as a regulator of membrane proteinases such as ADAM10 and MMP14/MT1-MMP. Activates ADAM10-dependent cleavage activity of amyloid precursor protein (APP). Activates MMP14/MT1-MMP-dependent cleavage activity. Plays a central role in retinal vascularization by regulating norrin (NDP) signal transduction. Acts in concert with norrin (NDP) to promote FZD4 multimerization and subsequent activation of FZD4, leading to promote accumulation of beta-catenin (CTNNB1) and stimulate LEF/TCF-mediated transcriptional programs. Suprisingly, it only activate the norrin (NDP)-dependent activation of FZD4, while it does not activate the Wnt-dependent activation of FZD4, suggesting the existence of a Wnt-independent signaling that also promote accumulation the beta-catenin (CTNNB1). This Mus musculus (Mouse) protein is Tetraspanin-12 (Tspan12).